The primary structure comprises 170 residues: Photosystem I assembly protein Ycf3 (170 aa).

3 TPR repeats span residues 35 to 68 (AFTYYRDGMLAQSEGNYAEALQNYYEATRLEIDP), 72 to 105 (SYILYNIGLIHTSNGEHTKALEYYFRALERNPFL), and 120 to 153 (GEQAILQGDSEIAEAWFDQAAEYWKQAIALTPGN).

It belongs to the Ycf3 family.

Its subcellular location is the plastid. The protein resides in the chloroplast thylakoid membrane. Essential for the assembly of the photosystem I (PSI) complex. May act as a chaperone-like factor to guide the assembly of the PSI subunits. This is Photosystem I assembly protein Ycf3 from Oryza nivara (Indian wild rice).